Consider the following 429-residue polypeptide: MSSVVVVGTQWGDEGKGKITDFLSEHAEVVARYQGGNNAGHTIVFNGVKYKLHLIPSGIFYKEKICVIGNGMVVDPKALLVELKYLHDRGVSTDNLRISNRAHVILPYHLKQDELEEERKGDNKIGTTKKGIGPAYMDKAARIGIRMADLLDREAFKEKLERNLAEKNRLFEKMYDAEGFNVDEIFEEYYEYGQQIAQYVCDTSVVLNDALDEGRRVLFEGAQGVMLDIDQGTYPFVTSSNPVAGGVTIGSGVGPSKIKRVVGVCKAYTSRVGDGPFPTELHDEIGQQIREVGREYGTTTGRPRRVGWFDSVVVRHARRVSGLTDLSLNSIDVLTGIPTVKICVAYKYNGEVLDEVPANLNILAKCEPVYEELPGWTEDITGVKSLEELPENARHYVERVSQLTGIPLAMFSVGPDRSQTNIVRNVYGI.

GTP-binding positions include 12–18 (GDEGKGK) and 40–42 (GHT). Catalysis depends on D13, which acts as the Proton acceptor. The Mg(2+) site is built by D13 and G40. IMP contacts are provided by residues 13–16 (DEGK), 38–41 (NAGH), T128, R142, Q223, T238, and R302. The Proton donor role is filled by H41. 298-304 (TTTGRPR) serves as a coordination point for substrate. GTP is bound by residues R304, 330–332 (SID), and 412–414 (SVG).

The protein belongs to the adenylosuccinate synthetase family. As to quaternary structure, homodimer. Requires Mg(2+) as cofactor.

It is found in the cytoplasm. The catalysed reaction is IMP + L-aspartate + GTP = N(6)-(1,2-dicarboxyethyl)-AMP + GDP + phosphate + 2 H(+). Its pathway is purine metabolism; AMP biosynthesis via de novo pathway; AMP from IMP: step 1/2. Plays an important role in the de novo pathway of purine nucleotide biosynthesis. Catalyzes the first committed step in the biosynthesis of AMP from IMP. The sequence is that of Adenylosuccinate synthetase from Bacillus cytotoxicus (strain DSM 22905 / CIP 110041 / 391-98 / NVH 391-98).